We begin with the raw amino-acid sequence, 147 residues long: Ribonuclease VapC43 (147 aa).

The region spanning 3–139 (CVDVNVLVYA…ARFRRLRWRH (137 aa)) is the PINc domain. 2 residues coordinate Mg(2+): Asp5 and Asp108.

This sequence belongs to the PINc/VapC protein family. Mg(2+) serves as cofactor.

Its function is as follows. Toxic component of a type II toxin-antitoxin (TA) system. An RNase. Its toxic effect is neutralized by coexpression with cognate antitoxin VapB43. This Mycobacterium tuberculosis (strain CDC 1551 / Oshkosh) protein is Ribonuclease VapC43.